The sequence spans 171 residues: Glutathione peroxidase-like peroxiredoxin GPX3 (171 aa).

Catalysis depends on Cys-43, which acts as the Cysteine sulfenic acid (-SOH) intermediate. A disulfide bridge links Cys-43 with Cys-89.

It belongs to the glutathione peroxidase family. Interacts with CAP1 and probably YBP1.

It carries out the reaction a hydroperoxide + [thioredoxin]-dithiol = an alcohol + [thioredoxin]-disulfide + H2O. Functionally, involved in oxidative stress response and redox homeostasis. Functions as a sensor and transducer of hydroperoxide stress. In response to hydroperoxide stress it oxidizes (activates) the transcription activator CAP1, which is involved in transcription activation of genes of the oxidative stress response pathway. May also play a direct role in hydroperoxide scavenging. The enzyme is not required for the glutaredoxin-mediated antioxidant function. In the presence of peroxides, GPX3 is directly oxidized at Cys-43 to form a cysteine sulfenic acid (-SOH). Cys-43-SOH then forms either an intramolecular disulfide bond (Cys-43 with Cys-89) or a transient, intermolecular disulfide bond with 'Cys-446' of CAP1, which is further resolved into a CAP1 intramolecular disulfide bond ('Cys-303' with 'Cys-598'), which causes its nuclear accumulation and activation, and a reduced Cys-43 in GPX3. Required for C.albicans-mediated macrophage killing. In Candida albicans (strain SC5314 / ATCC MYA-2876) (Yeast), this protein is Glutathione peroxidase-like peroxiredoxin GPX3.